The sequence spans 756 residues: 5-methyltetrahydropteroyltriglutamate--homocysteine methyltransferase (756 aa).

Residues Arg16–Lys19 and Lys112 contribute to the 5-methyltetrahydropteroyltri-L-glutamate site. L-homocysteine contacts are provided by residues Ile432–Ser434 and Glu485. L-methionine contacts are provided by residues Ile432 to Ser434 and Glu485. Residues Arg516–Cys517 and Trp562 each bind 5-methyltetrahydropteroyltri-L-glutamate. Asp600 is an L-homocysteine binding site. An L-methionine-binding site is contributed by Asp600. Glu606 is a binding site for 5-methyltetrahydropteroyltri-L-glutamate. Zn(2+) contacts are provided by His642, Cys644, and Glu666. His695 functions as the Proton donor in the catalytic mechanism. Position 727 (Cys727) interacts with Zn(2+).

The protein belongs to the vitamin-B12 independent methionine synthase family. Requires Zn(2+) as cofactor.

It carries out the reaction 5-methyltetrahydropteroyltri-L-glutamate + L-homocysteine = tetrahydropteroyltri-L-glutamate + L-methionine. It functions in the pathway amino-acid biosynthesis; L-methionine biosynthesis via de novo pathway; L-methionine from L-homocysteine (MetE route): step 1/1. In terms of biological role, catalyzes the transfer of a methyl group from 5-methyltetrahydrofolate to homocysteine resulting in methionine formation. This Haemophilus influenzae (strain PittEE) protein is 5-methyltetrahydropteroyltriglutamate--homocysteine methyltransferase.